The sequence spans 409 residues: Fructose-1,6-bisphosphatase, chloroplastic (409 aa).

A chloroplast-targeting transit peptide spans 1-49 (MAAATTTTSRPLLLSRQQAAASSLQCRLPRRPGSSLFAGQGQASTPNVR). Positions 131, 160, 181, 183, and 184 each coordinate Mg(2+). Residue 184-187 (DGSS) coordinates substrate. C223 and C228 form a disulfide bridge. Substrate is bound by residues N287, Y319, Y337, Y339, and K349. E355 contributes to the Mg(2+) binding site.

Belongs to the FBPase class 1 family. In terms of assembly, homotetramer. Requires Mg(2+) as cofactor. In photosynthetically active tissues, and in the shoot and root apical meristems.

The protein resides in the plastid. The protein localises to the chloroplast. It carries out the reaction beta-D-fructose 1,6-bisphosphate + H2O = beta-D-fructose 6-phosphate + phosphate. Its pathway is carbohydrate biosynthesis; Calvin cycle. In Triticum aestivum (Wheat), this protein is Fructose-1,6-bisphosphatase, chloroplastic (FBP).